A 96-amino-acid chain; its full sequence is Co-chaperonin GroES (96 aa).

It belongs to the GroES chaperonin family. As to quaternary structure, heptamer of 7 subunits arranged in a ring. Interacts with the chaperonin GroEL.

It localises to the cytoplasm. Together with the chaperonin GroEL, plays an essential role in assisting protein folding. The GroEL-GroES system forms a nano-cage that allows encapsulation of the non-native substrate proteins and provides a physical environment optimized to promote and accelerate protein folding. GroES binds to the apical surface of the GroEL ring, thereby capping the opening of the GroEL channel. This chain is Co-chaperonin GroES, found in Aromatoleum aromaticum (strain DSM 19018 / LMG 30748 / EbN1) (Azoarcus sp. (strain EbN1)).